The following is a 234-amino-acid chain: Small ribosomal subunit protein eS4 (234 aa).

The S4 RNA-binding domain maps to 39-102 (MPLVVVLRDL…NANYRVVIGM (64 aa)).

Belongs to the eukaryotic ribosomal protein eS4 family.

This chain is Small ribosomal subunit protein eS4, found in Methanocella arvoryzae (strain DSM 22066 / NBRC 105507 / MRE50).